Here is a 689-residue protein sequence, read N- to C-terminus: MIESYLAFIFLNKVNKKKAPSLDSLGYEEIKKRHDELVKLIRKYDYAYYVEAHPLVSDQEYDNLYHELETLEKLHPELITPDSPTQRIGETPLSGFSQVTHEIPMLSLENTYSKEELFAFLERIKRALPGKKISFTVEPKIDGVSISAVYKNGLFSLGATRGNGTVGDDITQNLKTIRSLPLRLETPDPPEYLEVRGEAYMSPKDFERLNAQREKEGKVLFANPRNATAGSLKQLDPRVVAERPLAVVFYGAGKLVGMKCKTQEEWLNFLKKIGLPIPIVFWVCSNENEVYEAIGKLNECRNQLPYPTDGAAVKVNEWEYYSLLGYTAKAPRWAFAYKYGAERAKTRLNNVIFQVGRSGTITPVAEMDPVFLSGTTVSRATLHNFDQVKRLDVKIGDVVYLEKAGEVIPEVVGVDLNQRRGTEKEIVPPEFCPSCGEKLSWEGIFLRCENENCPAQLKERILHFAQRNAMDIQGLGESLVDQLVDKGIVKDVADIYDLDEETLVNLDRMGKKSAQNLLKAIEESKKKDLSRLIFGLGIPHIGQKASEDLARYFGTMDKLSHATEEELLNLPFIGEIMARSIVNYFRKEANRRRLEKLRKKGLNFVSTLSQASSGTLSGKTFVITGTLSEPRESIAQKIISKGGRVSNSLSRKTSYLVVGSDPGSKLQEAKKLGIPLINEQELLEMLHGG.

NAD(+) is bound by residues 58-62 (DQEYD), 107-108 (SL), and Glu-138. The active-site N6-AMP-lysine intermediate is Lys-140. Positions 161, 198, 314, and 338 each coordinate NAD(+). The Zn(2+) site is built by Cys-432, Cys-435, Cys-448, and Cys-453. Residues 611–689 (ASSGTLSGKT…QELLEMLHGG (79 aa)) form the BRCT domain.

It belongs to the NAD-dependent DNA ligase family. LigA subfamily. Mg(2+) serves as cofactor. It depends on Mn(2+) as a cofactor.

The catalysed reaction is NAD(+) + (deoxyribonucleotide)n-3'-hydroxyl + 5'-phospho-(deoxyribonucleotide)m = (deoxyribonucleotide)n+m + AMP + beta-nicotinamide D-nucleotide.. DNA ligase that catalyzes the formation of phosphodiester linkages between 5'-phosphoryl and 3'-hydroxyl groups in double-stranded DNA using NAD as a coenzyme and as the energy source for the reaction. It is essential for DNA replication and repair of damaged DNA. The protein is DNA ligase of Methylacidiphilum infernorum (isolate V4) (Methylokorus infernorum (strain V4)).